We begin with the raw amino-acid sequence, 188 residues long: MATTADFRNGMCLEIEGQYYFIVEFLHVKPGKGPAFVRTKLKNVATGRILDKTWNSGVKVEEVRIERRPYQYLYQDEMGYNFMHPETFEQITIPGASIDGVQFLKDGDMVEAMVHATSETVLTCELPPHVKLRVTYTEPGLKGDTATNTLKPATVETGAEVRVPLFIQEGELIEVDTRDGSYIGRVKE.

It belongs to the elongation factor P family.

The protein localises to the cytoplasm. The protein operates within protein biosynthesis; polypeptide chain elongation. Its function is as follows. Involved in peptide bond synthesis. Stimulates efficient translation and peptide-bond synthesis on native or reconstituted 70S ribosomes in vitro. Probably functions indirectly by altering the affinity of the ribosome for aminoacyl-tRNA, thus increasing their reactivity as acceptors for peptidyl transferase. The polypeptide is Elongation factor P 1 (efp1) (Porphyromonas gingivalis (strain ATCC BAA-308 / W83)).